The chain runs to 82 residues: Probable tautomerase XF_1725 (82 aa).

Pro2 functions as the Proton acceptor; via imino nitrogen in the catalytic mechanism.

It belongs to the 4-oxalocrotonate tautomerase family.

This Xylella fastidiosa (strain 9a5c) protein is Probable tautomerase XF_1725.